The sequence spans 126 residues: MAEKLPPEVQAQLAKFQQLKDQLDRLLLEKSTIENELREINKVLEELSVLNADATIYKIVGNLLVKSDKTSVEKELNDRKELLELRSRTYQKQESILRKQLEDLQAKINEMLSKYYPQGGQTGIKA.

Belongs to the prefoldin subunit beta family. In terms of assembly, heterohexamer of two alpha and four beta subunits.

The protein localises to the cytoplasm. In terms of biological role, molecular chaperone capable of stabilizing a range of proteins. Seems to fulfill an ATP-independent, HSP70-like function in archaeal de novo protein folding. The chain is Prefoldin subunit beta from Saccharolobus islandicus (strain Y.N.15.51 / Yellowstone #2) (Sulfolobus islandicus).